The sequence spans 551 residues: Ubiquitin domain-containing protein DSK2b (551 aa).

A Ubiquitin-like domain is found at 18-93; the sequence is VAVNIRCSNG…IHMVRGSAPS (76 aa). The interval 88–127 is disordered; that stretch reads RGSAPSSAPPPAPAASQTTAPSVTRGVGSDNSSNLGGASP. STI1 domains follow at residues 143 to 184 and 197 to 236; these read GNAM…QNLM and NPQMRELVDRNPELGHVLNDPSILRQTLEAARNPELMREM. Residues 294 to 319 show a composition bias toward polar residues; sequence QGVTTQGSDASNNSSTPNAGTGTIPN. Residues 294 to 336 are disordered; sequence QGVTTQGSDASNNSSTPNAGTGTIPNANPLPNPWGATGGQTTA. 2 STI1 domains span residues 373-410 and 414-449; these read SPLGATPDASQLSQLLQNPAISQMMQSVFSNPQYMNQL and NPQLRSMLDSNPQLREMMQNPDFLRQFSSPEMMQQM. A disordered region spans residues 455–475; that stretch reads SLSQNRNTASQDAGQTGAATG. Over residues 465-475 the composition is skewed to low complexity; the sequence is QDAGQTGAATG. The UBA domain occupies 504 to 548; it reads PPEERYATQLQQLQEMGFYDRAENIRALLATNGNVNAAVERLLGS.

As to quaternary structure, interacts with 'Lys-48'-linked polyubiquitin chains via its UBA domain. Interacts with RPN10 via its ubiquitin-like domain. Interacts with PEX2 and PEX12. In terms of tissue distribution, ubiquitous.

The protein resides in the nucleus. The protein localises to the cytoplasm. Functionally, binds and presumably selects ubiquitin-conjugates for destruction. Prefers multiubiquitin chains rather than single ubiquitins, with a binding affinity for 'Lys-48'-linked ubiquitin chains. Acts as a ubiquitin receptor that associates with the 26S proteasomal docking subunit RPN10 for the indirect recognition of ubiquitinated substrates of ubiquitin/26S proteasome-mediated proteolysis (UPP). The sequence is that of Ubiquitin domain-containing protein DSK2b (DSK2B) from Arabidopsis thaliana (Mouse-ear cress).